The sequence spans 89 residues: Small ribosomal subunit protein uS15 (89 aa).

It belongs to the universal ribosomal protein uS15 family. As to quaternary structure, part of the 30S ribosomal subunit. Forms a bridge to the 50S subunit in the 70S ribosome, contacting the 23S rRNA.

Functionally, one of the primary rRNA binding proteins, it binds directly to 16S rRNA where it helps nucleate assembly of the platform of the 30S subunit by binding and bridging several RNA helices of the 16S rRNA. Its function is as follows. Forms an intersubunit bridge (bridge B4) with the 23S rRNA of the 50S subunit in the ribosome. This chain is Small ribosomal subunit protein uS15, found in Carboxydothermus hydrogenoformans (strain ATCC BAA-161 / DSM 6008 / Z-2901).